Reading from the N-terminus, the 732-residue chain is Cullin-3A (732 aa).

In terms of domain architecture, Cullin neddylation spans 662–724 (DRKPQIEAAI…RDFLERDSTD (63 aa)). K676 is covalently cross-linked (Glycyl lysine isopeptide (Lys-Gly) (interchain with G-Cter in NEDD8)).

It belongs to the cullin family. Interacts with CSN2 and RBX1A. Interacts with BTB/POZ domain-containing proteins BPM1, BPM2, BPM3, BPM6, BT1, BT2, BT3, BT5, AT1G01640, AT1G21780 and AT5G48510. Interacts with SR1IP1. Interacts with NPR3 and NPR4. Binds to NPR1; this interaction requires NPR3 and NPR4. In terms of processing, neddylated. Deneddylated via its interaction with the COP9 signalosome (CSN) complex.

Its function is as follows. Component of the cullin-RING ubiquitin ligases (CRL), or CUL3-RBX1-BTB protein E3 ligase complexes which mediate the ubiquitination and subsequent proteasomal degradation of target proteins. The functional specificity of the CRL complex depends on the BTB domain-containing protein as the substrate recognition component. Involved in embryo pattern formation and endosperm development. Required for the normal division and organization of the root stem cells and columella root cap cells. Regulates primary root growth by an unknown pathway, but in an ethylene-dependent manner. Functions in distal root patterning, by an ethylene-independent mechanism. Functionally redundant with CUL3B. The chain is Cullin-3A from Arabidopsis thaliana (Mouse-ear cress).